An 88-amino-acid polypeptide reads, in one-letter code: Large ribosomal subunit protein bL31B (88 aa).

It belongs to the bacterial ribosomal protein bL31 family. Type B subfamily. Part of the 50S ribosomal subunit.

This is Large ribosomal subunit protein bL31B from Nocardia farcinica (strain IFM 10152).